A 203-amino-acid polypeptide reads, in one-letter code: Translation initiation factor IF-3 (203 aa).

A disordered region spans residues 168 to 203 (QLSPKKKESATKKPATPKPATPAAVKAEKPAGDNEE). The segment covering 193–203 (KAEKPAGDNEE) has biased composition (basic and acidic residues).

This sequence belongs to the IF-3 family. In terms of assembly, monomer.

The protein resides in the cytoplasm. Its function is as follows. IF-3 binds to the 30S ribosomal subunit and shifts the equilibrium between 70S ribosomes and their 50S and 30S subunits in favor of the free subunits, thus enhancing the availability of 30S subunits on which protein synthesis initiation begins. The protein is Translation initiation factor IF-3 of Bacteroides fragilis (strain ATCC 25285 / DSM 2151 / CCUG 4856 / JCM 11019 / LMG 10263 / NCTC 9343 / Onslow / VPI 2553 / EN-2).